The following is a 468-amino-acid chain: Uronate isomerase (468 aa).

This sequence belongs to the metallo-dependent hydrolases superfamily. Uronate isomerase family.

It carries out the reaction D-glucuronate = D-fructuronate. It catalyses the reaction aldehydo-D-galacturonate = keto-D-tagaturonate. Its pathway is carbohydrate metabolism; pentose and glucuronate interconversion. The protein is Uronate isomerase of Lachnospira eligens (strain ATCC 27750 / DSM 3376 / VPI C15-48 / C15-B4) (Eubacterium eligens).